Here is a 101-residue protein sequence, read N- to C-terminus: MNLERIPNEEKLSLCRRYYLGGFAFLPFLWLVNILWFFKEAFLKPAYTEQPQIKSYVKKSALGLLLWVAVLTTWITVFQHFRAQWGEVGDYLSFTIPLGTA.

The Cytoplasmic segment spans residues 1–17 (MNLERIPNEEKLSLCRR). The helical intramembrane region spans 18 to 36 (YYLGGFAFLPFLWLVNILW). The Cytoplasmic segment spans residues 37-57 (FFKEAFLKPAYTEQPQIKSYV). Residues 58–78 (KKSALGLLLWVAVLTTWITVF) form a helical membrane-spanning segment. At 79–101 (QHFRAQWGEVGDYLSFTIPLGTA) the chain is on the lumenal side.

It belongs to the PEN-2 family. As to quaternary structure, the functional gamma-secretase complex is composed of at least four polypeptides: a presenilin homodimer (psen1 or psen2), nicastrin (ncstn), aph1 (aph1a or aph1b) and psenen.

The protein resides in the endoplasmic reticulum membrane. It is found in the golgi apparatus. The protein localises to the golgi stack membrane. Its subcellular location is the cell membrane. It localises to the membrane. Functionally, essential subunit of the gamma-secretase complex, an endoprotease complex that catalyzes the intramembrane cleavage of integral membrane proteins such as Notch receptors and APP (amyloid-beta precursor protein). The gamma-secretase complex plays a role in Notch and Wnt signaling cascades and regulation of downstream processes via its role in processing key regulatory proteins. The sequence is that of Gamma-secretase subunit PEN-2 (psenen) from Danio rerio (Zebrafish).